Consider the following 330-residue polypeptide: BTB/POZ domain-containing adapter for CUL3-mediated RhoA degradation protein 1 (330 aa).

Residues 1-34 (MSAEASGSSGGHAVTVSGSSPSSSSHVGEEKPGR) form a disordered region. The BTB domain maps to 40–108 (KYVKLNVGGT…LRDGTVPLPD (69 aa)). A compositionally biased stretch (low complexity) spans 282–291 (GGVSSSGAGQ). The interval 282 to 304 (GGVSSSGAGQSEEEGAGAGGGDR) is disordered.

This sequence belongs to the BACURD family.

The protein localises to the nucleus. In terms of biological role, substrate-specific adapter of a BCR (BTB-CUL3-RBX1) E3 ubiquitin-protein ligase complex required for synaptic transmission. The BCR(KCTD13) E3 ubiquitin ligase complex mediates the ubiquitination of RHOA, leading to its degradation by the proteasome, thereby regulating the actin cytoskeleton and promoting synaptic transmission. This chain is BTB/POZ domain-containing adapter for CUL3-mediated RhoA degradation protein 1, found in Danio rerio (Zebrafish).